Consider the following 415-residue polypeptide: Corticotropin-releasing factor receptor 1 (415 aa).

The signal sequence occupies residues 1 to 23 (MARHPQLRLVKALLLLGLNPVSA). The Extracellular portion of the chain corresponds to 24-111 (SLQDQHCESL…CQEILNEEKK (88 aa)). 3 disulfide bridges follow: C30–C54, C44–C87, and C68–C102. Residues N38, N78, and N98 are each glycosylated (N-linked (GlcNAc...) asparagine). Positions 99–108 (YSECQEILNE) are important for peptide agonist binding. Residues 112–142 (SKVHYHVAVIINYLGHCISLVALLVAFVLFL) form a helical membrane-spanning segment. Residues 143–149 (RLRSIRC) lie on the Cytoplasmic side of the membrane. The chain crosses the membrane as a helical span at residues 150 to 174 (LRNIIHWNLISAFILRNATWFVVQL). The Extracellular portion of the chain corresponds to 175 to 189 (TMSPEVHQSNVGWCR). C188 and C258 are oxidised to a cystine. Residues 190–218 (LVTAAYNYFHVTNFFWMFGEGCYLHTAIV) form a helical membrane-spanning segment. Residues 219-225 (LTYSTDR) are Cytoplasmic-facing. A helical transmembrane segment spans residues 226–253 (LRKWMFICIGWGVPFPIIVAWAIGKLYY). The Extracellular portion of the chain corresponds to 254 to 269 (DNEKCWFGKRPGVYTD). Residues 270 to 295 (YIYQGPMILVLLINFIFLFNIVRILM) form a helical membrane-spanning segment. Residues 280 to 290 (LLINFIFLFNI) are important for antagonist binding. The Cytoplasmic segment spans residues 296–306 (TKLRASTTSET). S301 is subject to Phosphoserine; by PKA. A helical membrane pass occupies residues 307–331 (IQYRKAVKATLVLLPLLGITYMLFF). The Extracellular portion of the chain corresponds to 332 to 338 (VNPGEDE). Residues 339 to 368 (VSRVVFIYFNSFLESFQGFFVSVFYCFLNS) form a helical membrane-spanning segment. Residues 369 to 415 (EVRSAIRKRWHRWQDKHSIRARVARAMSIPTSPTRVSFHSIKQSTAV) are Cytoplasmic-facing.

This sequence belongs to the G-protein coupled receptor 2 family. In terms of assembly, heterodimer; heterodimerizes with GPER1. Interacts (via N-terminal extracellular domain) with CRH and UCN. Interacts with DLG1; this inhibits endocytosis of CRHR1 after agonist binding. C-terminal Ser or Thr residues may be phosphorylated. Post-translationally, phosphorylation at Ser-301 by PKA prevents maximal coupling to Gq-protein, and thereby negatively regulates downstream signaling. As to expression, expressed abundantly in the pituitary, cerebral cortex, hippocampus, amygdala and cerebellum.

The protein localises to the cell membrane. It is found in the endosome. Functionally, G-protein coupled receptor for CRH (corticotropin-releasing factor) and UCN (urocortin). Has high affinity for CRH and UCN. Ligand binding causes a conformation change that triggers signaling via guanine nucleotide-binding proteins (G proteins) and down-stream effectors, such as adenylate cyclase. Promotes the activation of adenylate cyclase, leading to increased intracellular cAMP levels. Inhibits the activity of the calcium channel CACNA1H. Required for normal embryonic development of the adrenal gland and for normal hormonal responses to stress. Plays a role in the response to anxiogenic stimuli. This Macaca mulatta (Rhesus macaque) protein is Corticotropin-releasing factor receptor 1 (CRHR1).